An 865-amino-acid polypeptide reads, in one-letter code: Alanine--tRNA ligase (865 aa).

Positions 554, 558, 656, and 660 each coordinate Zn(2+).

It belongs to the class-II aminoacyl-tRNA synthetase family. Requires Zn(2+) as cofactor.

It localises to the cytoplasm. The catalysed reaction is tRNA(Ala) + L-alanine + ATP = L-alanyl-tRNA(Ala) + AMP + diphosphate. Its function is as follows. Catalyzes the attachment of alanine to tRNA(Ala) in a two-step reaction: alanine is first activated by ATP to form Ala-AMP and then transferred to the acceptor end of tRNA(Ala). Also edits incorrectly charged Ser-tRNA(Ala) and Gly-tRNA(Ala) via its editing domain. This chain is Alanine--tRNA ligase, found in Francisella philomiragia subsp. philomiragia (strain ATCC 25017 / CCUG 19701 / FSC 153 / O#319-036).